The sequence spans 556 residues: Serine/threonine-protein kinase PksC (556 aa).

Residues 20–287 enclose the Protein kinase domain; sequence YQLRDLLGEG…SAEAMRDECL (268 aa). Residues 26–34 and Lys-49 each bind ATP; that span reads LGEGGMASV. Asp-151 serves as the catalytic Proton acceptor. Disordered regions lie at residues 300–403 and 435–485; these read IVPG…PGGK and EDPE…DPDK. Positions 336–348 are enriched in pro residues; it reads QPTPSPGPNPYGT. Composition is skewed to low complexity over residues 360 to 381 and 445 to 458; these read YPQQ…QAAA and STAS…KAAG. Basic and acidic residues predominate over residues 461–475; the sequence is GPDKEKTIEKDKCTE. Residues 482–550 enclose the PASTA domain; the sequence is DPDKIQVPDF…MPEIQLKVST (69 aa).

Belongs to the protein kinase superfamily. Ser/Thr protein kinase family.

The enzyme catalyses L-seryl-[protein] + ATP = O-phospho-L-seryl-[protein] + ADP + H(+). The catalysed reaction is L-threonyl-[protein] + ATP = O-phospho-L-threonyl-[protein] + ADP + H(+). In Streptomyces coelicolor (strain ATCC BAA-471 / A3(2) / M145), this protein is Serine/threonine-protein kinase PksC (pksC).